A 441-amino-acid chain; its full sequence is ATP-dependent protease ATPase subunit HslU (441 aa).

ATP is bound by residues I18, 60 to 65 (GVGKTE), D254, E319, and R391.

This sequence belongs to the ClpX chaperone family. HslU subfamily. As to quaternary structure, a double ring-shaped homohexamer of HslV is capped on each side by a ring-shaped HslU homohexamer. The assembly of the HslU/HslV complex is dependent on binding of ATP.

Its subcellular location is the cytoplasm. Functionally, ATPase subunit of a proteasome-like degradation complex; this subunit has chaperone activity. The binding of ATP and its subsequent hydrolysis by HslU are essential for unfolding of protein substrates subsequently hydrolyzed by HslV. HslU recognizes the N-terminal part of its protein substrates and unfolds these before they are guided to HslV for hydrolysis. This Shewanella pealeana (strain ATCC 700345 / ANG-SQ1) protein is ATP-dependent protease ATPase subunit HslU.